Here is a 482-residue protein sequence, read N- to C-terminus: tRNA sulfurtransferase (482 aa).

The 105-residue stretch at 61–165 folds into the THUMP domain; it reads AEVLEILTHT…NDRLNQVLAS (105 aa). Residues 183 to 184, Lys265, Gly287, and Gln296 contribute to the ATP site; that span reads LI. Cys344 and Cys456 are joined by a disulfide. In terms of domain architecture, Rhodanese spans 404 to 482; sequence VEEHAIVLDI…GFNNVKVYRP (79 aa). Cys456 serves as the catalytic Cysteine persulfide intermediate.

This sequence belongs to the ThiI family.

It is found in the cytoplasm. It catalyses the reaction [ThiI sulfur-carrier protein]-S-sulfanyl-L-cysteine + a uridine in tRNA + 2 reduced [2Fe-2S]-[ferredoxin] + ATP + H(+) = [ThiI sulfur-carrier protein]-L-cysteine + a 4-thiouridine in tRNA + 2 oxidized [2Fe-2S]-[ferredoxin] + AMP + diphosphate. The catalysed reaction is [ThiS sulfur-carrier protein]-C-terminal Gly-Gly-AMP + S-sulfanyl-L-cysteinyl-[cysteine desulfurase] + AH2 = [ThiS sulfur-carrier protein]-C-terminal-Gly-aminoethanethioate + L-cysteinyl-[cysteine desulfurase] + A + AMP + 2 H(+). It participates in cofactor biosynthesis; thiamine diphosphate biosynthesis. Functionally, catalyzes the ATP-dependent transfer of a sulfur to tRNA to produce 4-thiouridine in position 8 of tRNAs, which functions as a near-UV photosensor. Also catalyzes the transfer of sulfur to the sulfur carrier protein ThiS, forming ThiS-thiocarboxylate. This is a step in the synthesis of thiazole, in the thiamine biosynthesis pathway. The sulfur is donated as persulfide by IscS. The sequence is that of tRNA sulfurtransferase from Vibrio campbellii (strain ATCC BAA-1116).